The following is a 174-amino-acid chain: Gamma-crystallin F (174 aa).

Beta/gamma crystallin 'Greek key' domains lie at 2-40 (GKITFYEDRGFQGRHYECSTDHSNLQPYFSRCNSVRVDS) and 41-83 (GCWM…HLIP). Residues 84–87 (HSSS) form a connecting peptide region. Beta/gamma crystallin 'Greek key' domains are found at residues 88 to 128 (HRIR…HVIE) and 129 to 171 (GYWV…RRIM).

The protein belongs to the beta/gamma-crystallin family.

Crystallins are the dominant structural components of the vertebrate eye lens. In Rattus norvegicus (Rat), this protein is Gamma-crystallin F (Crygf).